Reading from the N-terminus, the 526-residue chain is Fumitremorgin C synthase (526 aa).

Residues 4 to 24 (LPLSPAVLFLIIVLPILYLWI) form a helical membrane-spanning segment. Cys-443 contacts heme.

Belongs to the cytochrome P450 family. Requires heme as cofactor.

The protein resides in the membrane. It carries out the reaction tryprostatin A + reduced [NADPH--hemoprotein reductase] + O2 = fumitremorgin C + oxidized [NADPH--hemoprotein reductase] + 2 H2O + H(+). It functions in the pathway mycotoxin biosynthesis. Cytochrome P450 monooxygenase; part of the gene cluster that mediates the biosynthesis of fumitremorgins, indole alkaloids that carry not only intriguing chemical structures, but also interesting biological and pharmacological activities. The biosynthesis of fumitremorgin-type alkaloids begins by condensation of the two amino acids L-tryptophan and L-proline to brevianamide F, catalyzed by the non-ribosomal peptide synthetase ftmA. Brevianamide F is then prenylated by the prenyltransferase ftmPT1/ftmB in the presence of dimethylallyl diphosphate, resulting in the formation of tryprostatin B. The three cytochrome P450 monooxygenases, ftmP450-1/ftmC, ftmP450-2/ftmE and ftmP450-3/FtmG, are responsible for the conversion of tryprostatin B to 6-hydroxytryprostatin B, tryprostatin A to fumitremorgin C and fumitremorgin C to 12,13-dihydroxyfumitremorgin C, respectively. The putative methyltransferase ftmMT/ftmD is expected for the conversion of 6-hydroxytryprostatin B to tryprostatin A. FtmPT2/FtmH catalyzes the prenylation of 12,13-dihydroxyfumitre-morgin C in the presence of dimethylallyl diphosphate, resulting in the formation of fumitremorgin B. Fumitremorgin B is further converted to verruculogen by ftmOx1/ftmF via the insertion of an endoperoxide bond between the two prenyl moieties. In some fungal species, verruculogen is further converted to fumitremorgin A, but the enzymes involved in this step have not been identified yet. The protein is Fumitremorgin C synthase of Aspergillus fumigatus (Neosartorya fumigata).